We begin with the raw amino-acid sequence, 199 residues long: Golgi to ER traffic protein 1 (199 aa).

Residues 1 to 11 (MLLPDLHPYTI) lie on the Lumenal side of the membrane. Residues 12-31 (LLSIFLVLVAKQLVATIGKS) form a helical membrane-spanning segment. Topologically, residues 32–115 (TIQEFVWLVY…SIDKASNALI (84 aa)) are cytoplasmic. Residues 76 to 116 (YAKWTKLNRQADKLSAELQKLNQEIQQQKSSIDKASNALIL) are a coiled coil. A helical membrane pass occupies residues 116-136 (LVLTTLPIWIARVFYRKTHLF). At 137 to 160 (YIRQGIFPKYVEWVLALPFLPNGA) the chain is on the lumenal side. Residues 161–177 (VGLTIWMFAVNSVVSNF) traverse the membrane as a helical segment. The Cytoplasmic portion of the chain corresponds to 178 to 199 (SFLVSFPFAKRVSKPVRDTKVE).

It belongs to the WRB/GET1 family. Component of the Golgi to ER traffic (GET) complex, which is composed of GET1, GET2 and GET3. Within the complex, GET1 and GET2 form a heterotetramer which is stabilized by phosphatidylinositol binding and which binds to the GET3 homodimer.

Its subcellular location is the endoplasmic reticulum membrane. The protein localises to the golgi apparatus membrane. Required for the post-translational delivery of tail-anchored (TA) proteins to the endoplasmic reticulum. Together with GET2, acts as a membrane receptor for soluble GET3, which recognizes and selectively binds the transmembrane domain of TA proteins in the cytosol. The GET complex cooperates with the HDEL receptor ERD2 to mediate the ATP-dependent retrieval of resident ER proteins that contain a C-terminal H-D-E-L retention signal from the Golgi to the ER. This chain is Golgi to ER traffic protein 1, found in Candida albicans (strain SC5314 / ATCC MYA-2876) (Yeast).